The following is a 238-amino-acid chain: Dephospho-CoA kinase (238 aa).

In terms of domain architecture, DPCK spans 3 to 233 (IIGLTGGVGT…QRPFASPPRA (231 aa)). 11–16 (GTGKST) is a binding site for ATP. Disordered regions lie at residues 110 to 129 (HGVPLEEEPASQKRSGVGFS) and 219 to 238 (LASAGQRPFASPPRAGYSDG).

The protein belongs to the CoaE family.

Its subcellular location is the cytoplasm. It catalyses the reaction 3'-dephospho-CoA + ATP = ADP + CoA + H(+). It participates in cofactor biosynthesis; coenzyme A biosynthesis; CoA from (R)-pantothenate: step 5/5. Functionally, catalyzes the phosphorylation of the 3'-hydroxyl group of dephosphocoenzyme A to form coenzyme A. This is Dephospho-CoA kinase from Synechococcus sp. (strain JA-2-3B'a(2-13)) (Cyanobacteria bacterium Yellowstone B-Prime).